A 454-amino-acid chain; its full sequence is Bifunctional protein GlmU (454 aa).

The pyrophosphorylase stretch occupies residues 1 to 240 (MNVSVVILAA…EEEFMGVNSK (240 aa)). Residues 8-11 (LAAG), K22, and 87-88 (GT) each bind UDP-N-acetyl-alpha-D-glucosamine. D119 serves as a coordination point for Mg(2+). Positions 152, 166, 181, and 238 each coordinate UDP-N-acetyl-alpha-D-glucosamine. N238 is a Mg(2+) binding site. The linker stretch occupies residues 241-261 (IQLACAQEIMLQRLREKAMEQ). Positions 262 to 454 (GVIMNLPHTI…SDKNEEKKEQ (193 aa)) are N-acetyltransferase. Residues R325 and K342 each contribute to the UDP-N-acetyl-alpha-D-glucosamine site. H353 serves as the catalytic Proton acceptor. 2 residues coordinate UDP-N-acetyl-alpha-D-glucosamine: Y356 and N367. Acetyl-CoA-binding positions include A370, 376-377 (NY), S395, A413, and R430.

This sequence in the N-terminal section; belongs to the N-acetylglucosamine-1-phosphate uridyltransferase family. It in the C-terminal section; belongs to the transferase hexapeptide repeat family. As to quaternary structure, homotrimer. Requires Mg(2+) as cofactor.

The protein resides in the cytoplasm. The enzyme catalyses alpha-D-glucosamine 1-phosphate + acetyl-CoA = N-acetyl-alpha-D-glucosamine 1-phosphate + CoA + H(+). It catalyses the reaction N-acetyl-alpha-D-glucosamine 1-phosphate + UTP + H(+) = UDP-N-acetyl-alpha-D-glucosamine + diphosphate. It functions in the pathway nucleotide-sugar biosynthesis; UDP-N-acetyl-alpha-D-glucosamine biosynthesis; N-acetyl-alpha-D-glucosamine 1-phosphate from alpha-D-glucosamine 6-phosphate (route II): step 2/2. It participates in nucleotide-sugar biosynthesis; UDP-N-acetyl-alpha-D-glucosamine biosynthesis; UDP-N-acetyl-alpha-D-glucosamine from N-acetyl-alpha-D-glucosamine 1-phosphate: step 1/1. The protein operates within bacterial outer membrane biogenesis; LPS lipid A biosynthesis. Its function is as follows. Catalyzes the last two sequential reactions in the de novo biosynthetic pathway for UDP-N-acetylglucosamine (UDP-GlcNAc). The C-terminal domain catalyzes the transfer of acetyl group from acetyl coenzyme A to glucosamine-1-phosphate (GlcN-1-P) to produce N-acetylglucosamine-1-phosphate (GlcNAc-1-P), which is converted into UDP-GlcNAc by the transfer of uridine 5-monophosphate (from uridine 5-triphosphate), a reaction catalyzed by the N-terminal domain. The sequence is that of Bifunctional protein GlmU from Helicobacter hepaticus (strain ATCC 51449 / 3B1).